The primary structure comprises 481 residues: Cysteine--tRNA ligase (481 aa).

Cys29 serves as a coordination point for Zn(2+). The 'HIGH' region motif lies at Val31 to His41. Positions 209, 234, and 238 each coordinate Zn(2+). The 'KMSKS' region signature appears at Lys266 to Ser270. Lys269 contacts ATP.

The protein belongs to the class-I aminoacyl-tRNA synthetase family. Monomer. It depends on Zn(2+) as a cofactor.

Its subcellular location is the cytoplasm. The catalysed reaction is tRNA(Cys) + L-cysteine + ATP = L-cysteinyl-tRNA(Cys) + AMP + diphosphate. The protein is Cysteine--tRNA ligase of Geobacter sulfurreducens (strain ATCC 51573 / DSM 12127 / PCA).